Reading from the N-terminus, the 336-residue chain is Phenylalanine--tRNA ligase alpha subunit (336 aa).

Residue Glu-257 participates in Mg(2+) binding.

It belongs to the class-II aminoacyl-tRNA synthetase family. Phe-tRNA synthetase alpha subunit type 1 subfamily. In terms of assembly, tetramer of two alpha and two beta subunits. Mg(2+) is required as a cofactor.

The protein localises to the cytoplasm. The catalysed reaction is tRNA(Phe) + L-phenylalanine + ATP = L-phenylalanyl-tRNA(Phe) + AMP + diphosphate + H(+). The sequence is that of Phenylalanine--tRNA ligase alpha subunit from Xanthomonas campestris pv. campestris (strain 8004).